A 273-amino-acid polypeptide reads, in one-letter code: Dermonecrotic toxin LspaSicTox-alphaIA1ii (273 aa).

The active site involves H5. The Mg(2+) site is built by E25 and D27. The active-site Nucleophile is the H41. 2 disulfide bridges follow: C45–C51 and C47–C190. Residue D85 participates in Mg(2+) binding.

The protein belongs to the arthropod phospholipase D family. Class II subfamily. Mg(2+) is required as a cofactor. As to expression, expressed by the venom gland.

The protein localises to the secreted. The enzyme catalyses an N-(acyl)-sphingosylphosphocholine = an N-(acyl)-sphingosyl-1,3-cyclic phosphate + choline. It catalyses the reaction an N-(acyl)-sphingosylphosphoethanolamine = an N-(acyl)-sphingosyl-1,3-cyclic phosphate + ethanolamine. The catalysed reaction is a 1-acyl-sn-glycero-3-phosphocholine = a 1-acyl-sn-glycero-2,3-cyclic phosphate + choline. It carries out the reaction a 1-acyl-sn-glycero-3-phosphoethanolamine = a 1-acyl-sn-glycero-2,3-cyclic phosphate + ethanolamine. Functionally, dermonecrotic toxins cleave the phosphodiester linkage between the phosphate and headgroup of certain phospholipids (sphingolipid and lysolipid substrates), forming an alcohol (often choline) and a cyclic phosphate. This toxin acts on sphingomyelin (SM). It may also act on ceramide phosphoethanolamine (CPE), lysophosphatidylcholine (LPC) and lysophosphatidylethanolamine (LPE), but not on lysophosphatidylserine (LPS), and lysophosphatidylglycerol (LPG). It acts by transphosphatidylation, releasing exclusively cyclic phosphate products as second products. Induces dermonecrosis, hemolysis, increased vascular permeability, edema, inflammatory response, and platelet aggregation. The protein is Dermonecrotic toxin LspaSicTox-alphaIA1ii of Loxosceles spadicea (Recluse spider).